The following is a 378-amino-acid chain: Odorant receptor Or2 (378 aa).

Residue Met-1 is a topological domain, cytoplasmic. The chain crosses the membrane as a helical span at residues 2–22 (LIEECPIIGVNVRVWLFWSYL). Residues 23 to 29 (RRPRLSR) are Extracellular-facing. Residues 30–50 (FLVGCIPVAVLNVFQFLKLYS) traverse the membrane as a helical segment. Residues 51 to 59 (SWGDMSELI) are Cytoplasmic-facing. The helical transmembrane segment at 60–80 (INGYFTVLYFNLVLRTSFLVI) threads the bilayer. The Extracellular segment spans residues 81–120 (NRRKFETFFEGVAAEYALLEKNDDIRPVLERYTRRGRMLS). A helical transmembrane segment spans residues 121–141 (ISNLWLGAFISACFVTYPLFV). The Cytoplasmic segment spans residues 142–164 (PGRGLPYGVTIPGVDVLATPTYQ). Residues 165 to 185 (VVFVLQVYLTFPACCMYIPFT) form a helical membrane-spanning segment. The Extracellular segment spans residues 186–254 (SFYATCTLFA…HDLNSLVTHL (69 aa)). The chain crosses the membrane as a helical span at residues 255 to 275 (CLLEFLSFGMMLCALLFLLSI). At 276–278 (SNQ) the chain is on the cytoplasmic side. Residues 279–299 (LAQMIMIGSYIFMILSQMFAF) form a helical membrane-spanning segment. Residues 300-378 (YWHANEVLEQ…YFTLLRRVYN (79 aa)) lie on the Extracellular side of the membrane. N-linked (GlcNAc...) asparagine glycosylation occurs at Asn-364.

This sequence belongs to the insect chemoreceptor superfamily. Heteromeric odorant receptor channel (TC 1.A.69) family. Or30a subfamily. In terms of tissue distribution, expressed in male and female antennae and maxillary palps.

It is found in the cell membrane. In terms of biological role, odorant receptor which plays a critical role in the anthropophilic host-seeking behavior; establishes the host preference to transmit malaria. The protein is Odorant receptor Or2 (OR2) of Anopheles gambiae (African malaria mosquito).